The chain runs to 406 residues: 5-cytosine rRNA methyltransferase NSUN4 (406 aa).

S-adenosyl-L-methionine-binding residues include G207, G208, K209, D226, R231, D259, G260, and D277. C332 serves as the catalytic Nucleophile.

The protein belongs to the class I-like SAM-binding methyltransferase superfamily. RsmB/NOP family.

Its subcellular location is the mitochondrion. The catalysed reaction is a cytidine in rRNA + S-adenosyl-L-methionine = a 5-methylcytidine in rRNA + S-adenosyl-L-homocysteine + H(+). It catalyses the reaction a cytidine in mRNA + S-adenosyl-L-methionine = a 5-methylcytidine in mRNA + S-adenosyl-L-homocysteine + H(+). Involved in mitochondrial ribosome large subunit biogenesis. Its function is as follows. Mitochondrial RNA cytosine C(5)-methyltransferase that methylates cytosine to 5-methylcytosine (m5C) in various RNAs, such as rRNAs, mRNAs and some long non-coding RNAs (lncRNAs). Involved in mitochondrial ribosome small subunit (SSU) maturation by catalyzing methylation of mitochondrial 12S rRNA. This is 5-cytosine rRNA methyltransferase NSUN4 (nsun4) from Xenopus tropicalis (Western clawed frog).